Reading from the N-terminus, the 616-residue chain is Sialic acid TRAP transporter permease protein SiaT (616 aa).

The interval 1–190 (MKYINKLEEW…RISNYIKLGS (190 aa)) is TRAP transporter small permease. 17 helical membrane-spanning segments follow: residues 9 to 29 (EWLG…QILS), 36 to 56 (PLIW…MLGI), 83 to 103 (TNTF…HFGI), 117 to 137 (GGIS…LMMF), 153 to 173 (YLPA…LFFA), 195 to 215 (IALL…WSLF), 244 to 264 (FPLL…TGGI), 288 to 308 (IGAS…AGGL), 332 to 352 (ASCI…YGVI), 357 to 377 (IAKL…ALMA), 407 to 427 (FWAI…LFSP), 431 to 451 (AIVA…ELTL), 459 to 479 (IEAM…TFFG), 505 to 525 (VLVM…ALAL), 527 to 547 (FLVL…LIFF), 552 to 572 (TLNM…FVVA), and 587 to 607 (LPFL…PQII). A TRAP transporter large permease region spans residues 191-616 (SSVYIALLVW…ITFVPNLLIP (426 aa)).

The protein in the N-terminal section; belongs to the TRAP transporter small permease family. This sequence in the C-terminal section; belongs to the TRAP transporter large permease family. In terms of assembly, the complex comprises the extracytoplasmic solute receptor protein SiaP, and the fused transmembrane protein SiaT.

It localises to the cell inner membrane. Part of the tripartite ATP-independent periplasmic (TRAP) transport system SiaPT involved in the uptake of sialic acid. The chain is Sialic acid TRAP transporter permease protein SiaT (siaT) from Haemophilus influenzae (strain 86-028NP).